The sequence spans 364 residues: Probable UDP-arabinopyranose mutase 1 (364 aa).

The DXD motif signature appears at 103-105 (DDD). A glycan (N-linked (Glc...) arginine) is linked at Arg-151.

The protein belongs to the RGP family. In terms of assembly, homopentamer or homohexamer. Mn(2+) serves as cofactor. Requires Mg(2+) as cofactor. In terms of processing, reversibly glycosylated by UDP-glucose, UDP-xylose and UDP-galactose, but not UDP-mannose.

The protein localises to the secreted. It is found in the cell wall. Its subcellular location is the cell junction. It localises to the plasmodesma. The protein resides in the golgi apparatus. It catalyses the reaction UDP-beta-L-arabinofuranose = UDP-beta-L-arabinopyranose. With respect to regulation, inhibited by inhibitor protein (IP) which may be a form of sucrose synthase. Probable UDP-L-arabinose mutase involved in the biosynthesis of cell wall non-cellulosic polysaccharides. Was initially shown to possess an autoglycosylating activity which is dependent on the presence of UDP-glucose and manganese. The chain is Probable UDP-arabinopyranose mutase 1 from Pisum sativum (Garden pea).